The following is a 208-amino-acid chain: Interferon epsilon (208 aa).

The signal sequence occupies residues 1–21 (MIIKHFFGTVLVLLASTTIFS). An intrachain disulfide couples Cys53 to Cys163. Residues Asn95 and Asn104 are each glycosylated (N-linked (GlcNAc...) asparagine).

It belongs to the alpha/beta interferon family. In terms of tissue distribution, endometrium-specific.

The protein resides in the secreted. Its function is as follows. Type I interferon required for maintaining basal levels of IFN-regulated genes, including 2'-5'-oligoadenylate synthetase, IRF7 and ISG15, in the female reproductive tract. Directly mediates protection against viral and bacterial genital infections. The chain is Interferon epsilon (IFNE) from Homo sapiens (Human).